We begin with the raw amino-acid sequence, 505 residues long: Putative ribose/galactose/methyl galactoside import ATP-binding protein 1 (505 aa).

ABC transporter domains lie at 10-245 (LRLE…VGRS) and 256-501 (RPTD…SGYG). 42–49 (GENGAGKS) is a binding site for ATP.

It belongs to the ABC transporter superfamily. Carbohydrate importer 2 (CUT2) (TC 3.A.1.2) family.

Its subcellular location is the cell inner membrane. The catalysed reaction is D-ribose(out) + ATP + H2O = D-ribose(in) + ADP + phosphate + H(+). It carries out the reaction D-galactose(out) + ATP + H2O = D-galactose(in) + ADP + phosphate + H(+). Functionally, part of an ABC transporter complex involved in carbohydrate import. Could be involved in ribose, galactose and/or methyl galactoside import. Responsible for energy coupling to the transport system. This Agrobacterium fabrum (strain C58 / ATCC 33970) (Agrobacterium tumefaciens (strain C58)) protein is Putative ribose/galactose/methyl galactoside import ATP-binding protein 1.